The sequence spans 493 residues: Trigger factor (493 aa).

The region spanning 162–243 is the PPIase FKBP-type domain; that stretch reads GDFVSLDLSA…VRGVKEKELP (82 aa). The interval 432-493 is disordered; that stretch reads ELALPARPAP…AAVDSGDRDI (62 aa). Basic and acidic residues predominate over residues 449–470; that stretch reads HAGHDHEGHDHADHAGHDHAGD. The span at 474–485 shows a compositional bias: low complexity; it reads AEPAEAPAATAA.

Belongs to the FKBP-type PPIase family. Tig subfamily.

It localises to the cytoplasm. It carries out the reaction [protein]-peptidylproline (omega=180) = [protein]-peptidylproline (omega=0). Functionally, involved in protein export. Acts as a chaperone by maintaining the newly synthesized protein in an open conformation. Functions as a peptidyl-prolyl cis-trans isomerase. The protein is Trigger factor of Frankia alni (strain DSM 45986 / CECT 9034 / ACN14a).